We begin with the raw amino-acid sequence, 522 residues long: MRLRVRLLKRTWPLEVPETEPTLGHLRSHLRQSLLCTWGYSSNTRFTITLNYKDPLTGDEETLASYGIVSGDLICLILQDDIPAPNIPSSTDSEHSSLQNNEQPSLATSSNQTSMQDEQPSDSFQGQAAQSGVWNDDSMLGPSQNFEAESIQDNAHMAEGTGFYPSEPMLCSESVEGQVPHSLETLYQSADCSDANDALIVLIHLLMLESGYIPQGTEAKALSMPEKWKLSGVYKLQYMHPLCEGSSATLTCVPLGNLIVVNATLKINNEIRSVKRLQLLPESFICKEKLGENVANIYKDLQKLSRLFKDQLVYPLLAFTRQALNLPDVFGLVVLPLELKLRIFRLLDVRSVLSLSAVCRDLFTASNDPLLWRFLYLRDFRDNTVRVQDTDWKELYRKRHIQRKESPKGRFVMLLPSSTHTIPFYPNPLHPRPFPSSRLPPGIIGGEYDQRPTLPYVGDPISSLIPGPGETPSQFPPLRPRFDPVGPLPGPNPILPGRGGPNDRFPFRPSRGRPTDGRLSFM.

The interval Met1–Pro88 is ubiquitin-like. The tract at residues Pro85–Gln144 is disordered. Residues Ile87–Val133 are compositionally biased toward polar residues. Positions Asp92–Ala129 are important for interaction with PINK1. Positions Ala129 to Met169 are important for interaction with CDK6. The important for dimerization and interaction with PSMF1 stretch occupies residues Pro180–Leu324. The F-box domain maps to Val329 to Leu375. Residues Arg381–Met522 form an important for interaction with CDK6 region. An omega-N-methylarginine mark is found at Arg432 and Arg451. The RFDP motif signature appears at Arg481 to Pro484. Residues Asp483–Met522 are disordered. Arg518 carries the post-translational modification Asymmetric dimethylarginine.

As to quaternary structure, part of the SCF (SKP1-CUL1-F-box) E3 ubiquitin-protein ligase complex SCF(FBXO7) formed of CUL1, SKP1, RBX1 and FBXO7. Interacts via its C-terminal proline-rich region with DLGAP5. Interacts with BIRC2. Interacts with CDK6 and promotes its interaction with D-type cyclin. Interacts with PSMF1. In terms of assembly, interacts (via the N-terminal Ubl domain) with PRKN. Interact (via N-terminal region) with PINK1. Interact (via N-terminal region) with PINK1.

It localises to the cytoplasm. It is found in the nucleus. The protein resides in the mitochondrion. Its subcellular location is the cytosol. It functions in the pathway protein modification; protein ubiquitination. Functionally, substrate recognition component of a SCF (SKP1-CUL1-F-box protein) E3 ubiquitin-protein ligase complex which mediates the ubiquitination and subsequent proteasomal degradation of target proteins and plays a role in several biological processes such as cell cycle, cell proliferation, or maintenance of chromosome stability. Recognizes and ubiquitinates BIRC2 and the cell cycle regulator DLGAP5. Plays a role downstream of PINK1 in the clearance of damaged mitochondria via selective autophagy (mitophagy) by targeting PRKN to dysfunctional depolarized mitochondria. Promotes MFN1 ubiquitination. Mediates the ubiquitination and proteasomal degradation of UXT isoform 2, thereby impairing the NF-kappa-B signaling pathway. Inhibits NF-kappa-B pathway also by promoting the ubiquitination of TRAF2. Affects the assembly state and activity of the proteasome in the cells including neurons by ubiquitinating the proteasomal subunit PSMA2 via 'Lys-63'-linked polyubiquitin chains. Promotes 'Lys-48'-linked polyubiquitination SIRT7, leading to the hydrogen peroxide-induced cell death. This is F-box only protein 7 (FBXO7) from Homo sapiens (Human).